The following is a 208-amino-acid chain: ATP-dependent Clp protease proteolytic subunit 1 (208 aa).

The active-site Nucleophile is the S108. The active site involves H133.

The protein belongs to the peptidase S14 family. Fourteen ClpP subunits assemble into 2 heptameric rings which stack back to back to give a disk-like structure with a central cavity, resembling the structure of eukaryotic proteasomes.

The protein resides in the cytoplasm. It carries out the reaction Hydrolysis of proteins to small peptides in the presence of ATP and magnesium. alpha-casein is the usual test substrate. In the absence of ATP, only oligopeptides shorter than five residues are hydrolyzed (such as succinyl-Leu-Tyr-|-NHMec, and Leu-Tyr-Leu-|-Tyr-Trp, in which cleavage of the -Tyr-|-Leu- and -Tyr-|-Trp bonds also occurs).. In terms of biological role, cleaves peptides in various proteins in a process that requires ATP hydrolysis. Has a chymotrypsin-like activity. Plays a major role in the degradation of misfolded proteins. This Corynebacterium efficiens (strain DSM 44549 / YS-314 / AJ 12310 / JCM 11189 / NBRC 100395) protein is ATP-dependent Clp protease proteolytic subunit 1.